The primary structure comprises 458 residues: Argininosuccinate lyase (458 aa).

The protein belongs to the lyase 1 family. Argininosuccinate lyase subfamily.

Its subcellular location is the cytoplasm. The catalysed reaction is 2-(N(omega)-L-arginino)succinate = fumarate + L-arginine. Its pathway is amino-acid biosynthesis; L-arginine biosynthesis; L-arginine from L-ornithine and carbamoyl phosphate: step 3/3. The chain is Argininosuccinate lyase from Salmonella dublin (strain CT_02021853).